Here is a 906-residue protein sequence, read N- to C-terminus: ATP-dependent DNA helicase DDX11 (906 aa).

One can recognise a Helicase ATP-binding domain in the interval 9–442; sequence GGIHFPFPFP…KNLMYIKQIL (434 aa). Residue 44–51 coordinates ATP; that stretch reads SPTGTGKS. The tract at residues 78–111 is disordered; the sequence is APGSGPPSSEKNSLLTSSSCQEPTDTPRPAGEPD. Positions 85–96 are enriched in low complexity; sequence SSEKNSLLTSSS. Ser260 carries the post-translational modification Phosphoserine. [4Fe-4S] cluster is bound by residues Cys265 and Cys283. The segment covering 284–301 has biased composition (basic and acidic residues); it reads VDMQRSKREKNGTGEDKP. The disordered stretch occupies residues 284–310; it reads VDMQRSKREKNGTGEDKPKRKRQKIQT. Residues Cys312 and Cys347 each contribute to the [4Fe-4S] cluster site. Residues 390 to 393 carry the DEAH box motif; that stretch reads DEAH.

The protein belongs to the DEAD box helicase family. DEAH subfamily. DDX11/CHL1 sub-subfamily. Associates with the CTF18-RFC complex. Associates with a cohesin complex composed of RAD21, SMC1 proteins and SMC3. Interacts with CHTF18. Interacts with DSCC1. Interacts with FEN1; this interaction is direct and increases flap endonuclease activity of FEN1. Interacts with PCNA. Interacts with POLR1A and UBTF. Interacts with RAD21, SMC1 proteins and SMC3. Interacts with RFC2. Interacts with TIMELESS; this interaction increases recruitment of both proteins onto chromatin in response to replication stress induction by hydroxyurea. [4Fe-4S] cluster is required as a cofactor.

The protein resides in the nucleus. It is found in the nucleolus. It localises to the cytoplasm. The protein localises to the cytoskeleton. Its subcellular location is the spindle pole. The protein resides in the midbody. It is found in the microtubule organizing center. It localises to the centrosome. It carries out the reaction Couples ATP hydrolysis with the unwinding of duplex DNA at the replication fork by translocating in the 5'-3' direction. This creates two antiparallel DNA single strands (ssDNA). The leading ssDNA polymer is the template for DNA polymerase III holoenzyme which synthesizes a continuous strand.. It catalyses the reaction ATP + H2O = ADP + phosphate + H(+). DNA-dependent ATPase and ATP-dependent DNA helicase that participates in various functions in genomic stability, including DNA replication, DNA repair and heterochromatin organization as well as in ribosomal RNA synthesis. Its double-stranded DNA helicase activity requires either a minimal 5'-single-stranded tail length of approximately 15 nt (flap substrates) or 10 nt length single-stranded gapped DNA substrates of a partial duplex DNA structure for helicase loading and translocation along DNA in a 5' to 3' direction. The helicase activity is capable of displacing duplex regions up to 100 bp, which can be extended up to 500 bp by the replication protein A (RPA) or the cohesion CTF18-replication factor C (Ctf18-RFC) complex activities. Also shows ATPase- and helicase activities on substrates that mimic key DNA intermediates of replication, repair and homologous recombination reactions, including forked duplex, anti-parallel G-quadruplex and three-stranded D-loop DNA molecules. Plays a role in DNA double-strand break (DSB) repair at the DNA replication fork during DNA replication recovery from DNA damage. Recruited with TIMELESS factor upon DNA-replication stress response at DNA replication fork to preserve replication fork progression, and hence ensure DNA replication fidelity. Also cooperates with TIMELESS factor during DNA replication to regulate proper sister chromatid cohesion and mitotic chromosome segregation. Stimulates 5'-single-stranded DNA flap endonuclease activity of FEN1 in an ATP- and helicase-independent manner; and hence it may contribute in Okazaki fragment processing at DNA replication fork during lagging strand DNA synthesis. Its ability to function at DNA replication fork is modulated by its binding to long non-coding RNA (lncRNA) cohesion regulator non-coding RNA DDX11-AS1/CONCR, which is able to increase both DDX11 ATPase activity and binding to DNA replicating regions. Also plays a role in heterochromatin organization. Involved in rRNA transcription activation through binding to active hypomethylated rDNA gene loci by recruiting UBTF and the RNA polymerase Pol I transcriptional machinery. Plays a role in embryonic development and prevention of aneuploidy. Involved in melanoma cell proliferation and survival. Associates with chromatin at DNA replication fork regions. Binds to single- and double-stranded DNAs. The chain is ATP-dependent DNA helicase DDX11 from Mus musculus (Mouse).